Here is a 171-residue protein sequence, read N- to C-terminus: Putative MucR family transcriptional regulatory protein y4pD (171 aa).

It belongs to the ros/MucR family.

This Sinorhizobium fredii (strain NBRC 101917 / NGR234) protein is Putative MucR family transcriptional regulatory protein y4pD.